The sequence spans 481 residues: MDNHNEVPMSMSAPWASAARVTCLSLDAKCHRPCPSSISASASASGCASDSAAIATTKLRHIAYTQRCSSRLTMLMTVLLLLLPLSFTPAHSCGPGRGLGRRRERNLYPLVLKQTIPNLSEYQSGASGPLEGEIKRDSPKFKDLVPNYNRDILFRDEEGTGADRLMTKRCKEKLNVLAYSVMNEWPGVRLLVTESWDEDHQHGQESLHYEGRAVTIATSDREPSRYGMLARLAVEAGFDWVSYVSRRHIYCSVKSDSSISSHVHGCFTPESTALLESGITKPLSEIAIGDRVLSMGSNGQPVYSEVILFMDRNLEQMQNFVELHTDGGAVLTVTPAHLISVWHPERQQLDYVFADRVEELNYVLVRDPQTGELRPQRVVRVGSVRSKGVVAPLTREGTIVVNSVAASCYAVIDSQSLAHWGLAPMRILAMLQSWMPAKDQLRSSQTEGVVSRAEQQNGIHWYANALYKVKDYVLPKSWRHD.

Cys-93 is lipidated: N-palmitoyl cysteine. Ca(2+) contacts are provided by Glu-157, Glu-158, Asp-163, Thr-193, Glu-194, Asp-197, and Asp-199. Residue Gly-265 is the site of Cholesterol glycine ester attachment.

Belongs to the hedgehog family. Interacts with shf. The C-terminal part of the hedgehog protein precursor displays an autoproteolysis activity that results in the cleavage of the full-length protein into two parts (N-product and C-product). In addition, the C-terminal part displays a cholesterol transferase activity that results by the covalent attachment of a cholesterol moiety to the C-terminal of the newly generated N-product. The N-product is the active species in both local and long-range signaling, whereas the C-product has no signaling activity. Post-translationally, cholesterylation is required for N-product targeting to lipid rafts and multimerization. In terms of processing, N-palmitoylation by Rasp of the hedgehog N-product, within the secretory pathway, is required for the embryonic and larval patterning activities of the hedgehog signal.

Its subcellular location is the nucleus. The protein resides in the cytoplasm. The protein localises to the cell membrane. It carries out the reaction glycyl-L-cysteinyl-[protein] + cholesterol + H(+) = [protein]-C-terminal glycyl cholesterol ester + N-terminal L-cysteinyl-[protein]. The C-terminal part of the hedgehog protein precursor displays an autoproteolysis activity that results in the cleavage of the full-length protein into two parts (N-product and C-product). In addition, the C-terminal part displays a cholesterol transferase activity that results by the covalent attachment of a cholesterol moiety to the C-terminal of the newly generated N-product. Once cleaved, the C-product has no signaling activity and diffuses from the cell. Functionally, the dually lipidated hedgehog protein N-product is a morphogen which is essential for a variety of patterning events during development. Establishes the anterior-posterior axis of the embryonic segments and patterns the larval imaginal disks. Binds to the patched (ptc) receptor, which functions in association with smoothened (smo), to activate the transcription of target genes wingless (wg), decapentaplegic (dpp) and ptc. In the absence of hh, ptc represses the constitutive signaling activity of smo through fused (fu). Essential component of a signaling pathway which regulates the Duox-dependent gut immune response to bacterial uracil; required to activate Cad99C-dependent endosome formation, norpA-dependent Ca2+ mobilization and p38 MAPK, which are essential steps in the Duox-dependent production of reactive oxygen species (ROS) in response to intestinal bacterial infection. During photoreceptor differentiation, it up-regulates transcription of Ubr3, which in turn promotes the hh-signaling pathway by mediating the ubiquitination and degradation of cos. The sequence is that of Protein hedgehog from Drosophila persimilis (Fruit fly).